We begin with the raw amino-acid sequence, 396 residues long: 1-deoxy-D-xylulose 5-phosphate reductoisomerase (396 aa).

Thr13, Gly14, Ser15, Ile16, and Asn127 together coordinate NADPH. Residue Lys128 participates in 1-deoxy-D-xylulose 5-phosphate binding. Glu129 provides a ligand contact to NADPH. Residue Asp153 coordinates Mn(2+). Residues Ser154, Glu155, Ser184, and His207 each coordinate 1-deoxy-D-xylulose 5-phosphate. A Mn(2+)-binding site is contributed by Glu155. Gly213 serves as a coordination point for NADPH. 1-deoxy-D-xylulose 5-phosphate is bound by residues Ser220, Asn225, Lys226, and Glu229. Glu229 provides a ligand contact to Mn(2+).

It belongs to the DXR family. Mg(2+) serves as cofactor. Mn(2+) is required as a cofactor.

It carries out the reaction 2-C-methyl-D-erythritol 4-phosphate + NADP(+) = 1-deoxy-D-xylulose 5-phosphate + NADPH + H(+). The protein operates within isoprenoid biosynthesis; isopentenyl diphosphate biosynthesis via DXP pathway; isopentenyl diphosphate from 1-deoxy-D-xylulose 5-phosphate: step 1/6. Its function is as follows. Catalyzes the NADPH-dependent rearrangement and reduction of 1-deoxy-D-xylulose-5-phosphate (DXP) to 2-C-methyl-D-erythritol 4-phosphate (MEP). This is 1-deoxy-D-xylulose 5-phosphate reductoisomerase from Pseudomonas fluorescens (strain ATCC BAA-477 / NRRL B-23932 / Pf-5).